The primary structure comprises 228 residues: Enolase-phosphatase E1 (228 aa).

This sequence belongs to the HAD-like hydrolase superfamily. MasA/MtnC family. Monomer. Mg(2+) is required as a cofactor.

The enzyme catalyses 5-methylsulfanyl-2,3-dioxopentyl phosphate + H2O = 1,2-dihydroxy-5-(methylsulfanyl)pent-1-en-3-one + phosphate. It functions in the pathway amino-acid biosynthesis; L-methionine biosynthesis via salvage pathway; L-methionine from S-methyl-5-thio-alpha-D-ribose 1-phosphate: step 3/6. The protein operates within amino-acid biosynthesis; L-methionine biosynthesis via salvage pathway; L-methionine from S-methyl-5-thio-alpha-D-ribose 1-phosphate: step 4/6. Bifunctional enzyme that catalyzes the enolization of 2,3-diketo-5-methylthiopentyl-1-phosphate (DK-MTP-1-P) into the intermediate 2-hydroxy-3-keto-5-methylthiopentenyl-1-phosphate (HK-MTPenyl-1-P), which is then dephosphorylated to form the acireductone 1,2-dihydroxy-3-keto-5-methylthiopentene (DHK-MTPene). This Picosynechococcus sp. (strain ATCC 27264 / PCC 7002 / PR-6) (Agmenellum quadruplicatum) protein is Enolase-phosphatase E1.